A 623-amino-acid polypeptide reads, in one-letter code: Leucine aminopeptidase 2 (623 aa).

Residues 136-138 (QCE) and 261-266 (PYGGME) contribute to the a peptide site. Histidine 290 serves as a coordination point for Zn(2+). Glutamate 291 serves as the catalytic Proton acceptor. Zn(2+)-binding residues include histidine 294 and glutamate 313. Tyrosine 391 serves as the catalytic Proton donor.

It belongs to the peptidase M1 family. It depends on Zn(2+) as a cofactor.

It is found in the cytoplasm. Its subcellular location is the nucleus. It catalyses the reaction an epoxide + H2O = an ethanediol. In terms of biological role, aminopeptidase that preferentially cleaves di- and tripeptides. Also has low epoxide hydrolase activity (in vitro). Can hydrolyze the epoxide leukotriene LTA(4) but it forms preferentially 5,6-dihydroxy-7,9,11,14-eicosatetraenoic acid rather than the cytokine leukotriene B(4) as the product compared to the homologous mammalian enzyme (in vitro). This chain is Leucine aminopeptidase 2 (LKH1), found in Candida albicans (strain SC5314 / ATCC MYA-2876) (Yeast).